The chain runs to 156 residues: Transcription antitermination protein NusB (156 aa).

The protein belongs to the NusB family.

Functionally, involved in transcription antitermination. Required for transcription of ribosomal RNA (rRNA) genes. Binds specifically to the boxA antiterminator sequence of the ribosomal RNA (rrn) operons. The chain is Transcription antitermination protein NusB from Mycobacterium tuberculosis (strain CDC 1551 / Oshkosh).